The primary structure comprises 457 residues: Paired box protein Pax-8 (457 aa).

Positions 9–135 (GHGGLNQLGG…SSINRIIRTK (127 aa)) form a DNA-binding region, paired. The interval 12–68 (GLNQLGGAFVNGRPLPEVVRQRIVDLAHQGVRPCDISRQLRVSHGCVSKILGRYYET) is PAI subdomain. Positions 87-135 (KVVEKIGDYKRQNPTMFAWEIRDRLLAEGVCDNDTVPSVSSINRIIRTK) are RED subdomain. Polar residues predominate over residues 159–182 (LIPSSAVTPPESPQSDSLGSTYSI). A disordered region spans residues 159 to 224 (LIPSSAVTPP…SSSSGPRKHL (66 aa)). Ser-304 bears the Phosphoserine mark.

In terms of assembly, interacts with WWTR1. Expressed in the developing excretory system and the thyroid gland.

The protein resides in the nucleus. Thought to encode a transcription factor. It may have a role in kidney cell differentiation. May play a regulatory role in mammalian development. The protein is Paired box protein Pax-8 (Pax8) of Mus musculus (Mouse).